Reading from the N-terminus, the 309-residue chain is Chronophin (309 aa).

D25 acts as the Nucleophile in catalysis. D25 and D27 together coordinate Mg(2+). The active-site Proton donor is D27. Substrate-binding positions include 58 to 60, H178, and K209; that span reads SNN. Residue D234 coordinates Mg(2+).

This sequence belongs to the HAD-like hydrolase superfamily. As to quaternary structure, homodimer. Requires Mg(2+) as cofactor.

The protein localises to the cytoplasm. Its subcellular location is the cytosol. It is found in the cytoskeleton. It localises to the cell projection. The protein resides in the ruffle membrane. The protein localises to the lamellipodium membrane. Its subcellular location is the cell membrane. It carries out the reaction pyridoxal 5'-phosphate + H2O = pyridoxal + phosphate. The enzyme catalyses pyridoxine 5'-phosphate + H2O = pyridoxine + phosphate. It catalyses the reaction pyridoxamine + phosphate = pyridoxamine 5'-phosphate + H2O. The catalysed reaction is O-phospho-L-seryl-[protein] + H2O = L-seryl-[protein] + phosphate. Its function is as follows. Functions as a pyridoxal phosphate (PLP) phosphatase, which also catalyzes the dephosphorylation of pyridoxine 5'-phosphate (PNP) and pyridoxamine 5'-phosphate (PMP), with order of substrate preference PLP &gt; PNP &gt; PMP and therefore plays a role in vitamin B6 metabolism. Also functions as a protein serine phosphatase that specifically dephosphorylates 'Ser-3' in proteins of the actin-depolymerizing factor (ADF)/cofilin family like CFL1 and DSTN. Thereby, regulates cofilin-dependent actin cytoskeleton reorganization, being required for normal progress through mitosis and normal cytokinesis. Does not dephosphorylate phosphothreonines in LIMK1. Does not dephosphorylate peptides containing phosphotyrosine. The chain is Chronophin from Rattus norvegicus (Rat).